The chain runs to 23 residues: Mu-conotoxin-like SxIIIB (23 aa).

The residue at position 1 (glutamine 1) is a Pyrrolidone carboxylic acid. 3 cysteine pairs are disulfide-bonded: cysteine 3-cysteine 16, cysteine 4-cysteine 21, and cysteine 11-cysteine 22. Position 23 is an alanine amide (alanine 23).

This sequence belongs to the conotoxin M superfamily. In terms of tissue distribution, expressed by the venom duct.

It localises to the secreted. Its function is as follows. Mu-conotoxins block voltage-gated sodium channels (Nav). The sequence is that of Mu-conotoxin-like SxIIIB from Conus striolatus (Cone snail).